The chain runs to 267 residues: NAD kinase 2 (267 aa).

Aspartate 52 acts as the Proton acceptor in catalysis. NAD(+) is bound by residues aspartate 52–glycine 53, asparagine 124–glutamate 125, arginine 151, aspartate 153, threonine 164–serine 169, and alanine 188.

Belongs to the NAD kinase family. Requires a divalent metal cation as cofactor.

It localises to the cytoplasm. It catalyses the reaction NAD(+) + ATP = ADP + NADP(+) + H(+). In terms of biological role, involved in the regulation of the intracellular balance of NAD and NADP, and is a key enzyme in the biosynthesis of NADP. Catalyzes specifically the phosphorylation on 2'-hydroxyl of the adenosine moiety of NAD to yield NADP. This chain is NAD kinase 2, found in Geobacillus kaustophilus (strain HTA426).